The sequence spans 505 residues: ATP synthase subunit alpha (505 aa).

170–177 provides a ligand contact to ATP; it reads GDRQTGKT.

Belongs to the ATPase alpha/beta chains family. As to quaternary structure, F-type ATPases have 2 components, CF(1) - the catalytic core - and CF(0) - the membrane proton channel. CF(1) has five subunits: alpha(3), beta(3), gamma(1), delta(1), epsilon(1). CF(0) has four main subunits: a(1), b(1), b'(1) and c(9-12).

Its subcellular location is the cellular thylakoid membrane. It carries out the reaction ATP + H2O + 4 H(+)(in) = ADP + phosphate + 5 H(+)(out). Functionally, produces ATP from ADP in the presence of a proton gradient across the membrane. The alpha chain is a regulatory subunit. This chain is ATP synthase subunit alpha, found in Trichodesmium erythraeum (strain IMS101).